The primary structure comprises 179 residues: Large ribosomal subunit protein uL5 (179 aa).

Position 3 is an N6-acetyllysine (Lys-3).

Belongs to the universal ribosomal protein uL5 family. In terms of assembly, part of the 50S ribosomal subunit; part of the 5S rRNA/L5/L18/L25 subcomplex. Contacts the 5S rRNA and the P site tRNA. Forms a bridge to the 30S subunit in the 70S ribosome.

Its function is as follows. This is one of the proteins that bind and probably mediate the attachment of the 5S RNA into the large ribosomal subunit, where it forms part of the central protuberance. In the 70S ribosome it contacts protein S13 of the 30S subunit (bridge B1b), connecting the 2 subunits; this bridge is implicated in subunit movement. Contacts the P site tRNA; the 5S rRNA and some of its associated proteins might help stabilize positioning of ribosome-bound tRNAs. The sequence is that of Large ribosomal subunit protein uL5 from Escherichia coli O45:K1 (strain S88 / ExPEC).